The following is a 489-amino-acid chain: Kynureninase 2 (489 aa).

Polar residues predominate over residues 1–12 (MDASAAISQLRQ). Residues 1–25 (MDASAAISQLRQGQKPEWPQNANTS) form a disordered region. Pyridoxal 5'-phosphate is bound by residues leucine 149, threonine 150, 177 to 180 (FPSD), aspartate 261, histidine 264, and tyrosine 286. Lysine 287 carries the post-translational modification N6-(pyridoxal phosphate)lysine. Positions 317 and 345 each coordinate pyridoxal 5'-phosphate.

The protein belongs to the kynureninase family. As to quaternary structure, homodimer. It depends on pyridoxal 5'-phosphate as a cofactor.

Its subcellular location is the cytoplasm. It catalyses the reaction L-kynurenine + H2O = anthranilate + L-alanine + H(+). It carries out the reaction 3-hydroxy-L-kynurenine + H2O = 3-hydroxyanthranilate + L-alanine + H(+). It functions in the pathway amino-acid degradation; L-kynurenine degradation; L-alanine and anthranilate from L-kynurenine: step 1/1. It participates in cofactor biosynthesis; NAD(+) biosynthesis; quinolinate from L-kynurenine: step 2/3. Catalyzes the cleavage of L-kynurenine (L-Kyn) and L-3-hydroxykynurenine (L-3OHKyn) into anthranilic acid (AA) and 3-hydroxyanthranilic acid (3-OHAA), respectively. The protein is Kynureninase 2 of Phaeosphaeria nodorum (strain SN15 / ATCC MYA-4574 / FGSC 10173) (Glume blotch fungus).